A 62-amino-acid polypeptide reads, in one-letter code: Snaclec aspercetin subunit beta (62 aa).

C2 and C13 are joined by a disulfide. One can recognise a C-type lectin domain in the interval 9-62 (YEGHCYRVFKPPKDWADAERFCSQQAKGGHLVSIERFGREDFVSNLITKNLQRG).

The protein belongs to the snaclec family. In terms of assembly, heterodimer; disulfide-linked. In terms of tissue distribution, expressed by the venom gland.

The protein resides in the secreted. In terms of biological role, snaclec that binds to von Willebrand factor (VWF) and induces its interaction with GPIbalpha (GP1BA) (via the vWF A1 domain), resulting in platelet aggregation. Intramuscular and intravenous injections in mice induce a dose-dependent drop in platelet count (thrombocytopenia). Pretreatment by intravenous injection by this protein in mice potentiates the hemorrhagic lesion in the skin provoked by the metalloproteinase BaP1 intradermally injected. This result is not observed when both BaP1 and this protein are injected simultaneously. This chain is Snaclec aspercetin subunit beta, found in Bothrops asper (Terciopelo).